A 113-amino-acid polypeptide reads, in one-letter code: MAYLVAVTACVSGVAHTYMAAERLEKLCLLEKWGVSIETQGALGTENRLADEDIRRADVALLITDIELAGAERFEHCRYVQCSIYAFLREPQRVMSAVRKVLSAPQQTHLILE.

A PTS EIIB type-2 domain is found at 1–100; sequence MAYLVAVTAC…PQRVMSAVRK (100 aa). The active-site Phosphocysteine intermediate is C10. C10 is modified (phosphocysteine; by EIIA).

It localises to the cytoplasm. The enzyme catalyses D-fructose(out) + N(pros)-phospho-L-histidyl-[protein] = D-fructose 1-phosphate(in) + L-histidyl-[protein]. Functionally, the phosphoenolpyruvate-dependent sugar phosphotransferase system (sugar PTS), a major carbohydrate active transport system, catalyzes the phosphorylation of incoming sugar substrates concomitantly with their translocation across the cell membrane. The protein is PTS system fructose-like EIIB component 3 (frwD) of Escherichia coli (strain K12).